Reading from the N-terminus, the 311-residue chain is Cytochrome c biogenesis protein CcsA (311 aa).

8 helical membrane passes run V11–W31, V44–W64, G68–F88, L101–L121, V146–F166, T217–N237, T251–L268, and V280–I300.

The protein belongs to the CcmF/CycK/Ccl1/NrfE/CcsA family. In terms of assembly, may interact with ccs1.

The protein localises to the cellular thylakoid membrane. In terms of biological role, required during biogenesis of c-type cytochromes (cytochrome c6 and cytochrome f) at the step of heme attachment. The chain is Cytochrome c biogenesis protein CcsA from Synechococcus sp. (strain RCC307).